A 217-amino-acid chain; its full sequence is 3,4-dihydroxy-2-butanone 4-phosphate synthase (217 aa).

D-ribulose 5-phosphate is bound by residues 37–38 (RE), Asp-42, 150–154 (RGGHT), and Glu-174. Residue Glu-38 participates in Mg(2+) binding. His-153 lines the Mg(2+) pocket.

This sequence belongs to the DHBP synthase family. As to quaternary structure, homodimer. Requires Mg(2+) as cofactor. It depends on Mn(2+) as a cofactor.

It carries out the reaction D-ribulose 5-phosphate = (2S)-2-hydroxy-3-oxobutyl phosphate + formate + H(+). It functions in the pathway cofactor biosynthesis; riboflavin biosynthesis; 2-hydroxy-3-oxobutyl phosphate from D-ribulose 5-phosphate: step 1/1. Functionally, catalyzes the conversion of D-ribulose 5-phosphate to formate and 3,4-dihydroxy-2-butanone 4-phosphate. In Enterobacter sp. (strain 638), this protein is 3,4-dihydroxy-2-butanone 4-phosphate synthase.